Consider the following 167-residue polypeptide: ATP synthase subunit b (167 aa).

The chain crosses the membrane as a helical span at residues 7–25 (SFWLTISFVIFVYLIYRPA).

Belongs to the ATPase B chain family. In terms of assembly, F-type ATPases have 2 components, F(1) - the catalytic core - and F(0) - the membrane proton channel. F(1) has five subunits: alpha(3), beta(3), gamma(1), delta(1), epsilon(1). F(0) has three main subunits: a(1), b(2) and c(10-14). The alpha and beta chains form an alternating ring which encloses part of the gamma chain. F(1) is attached to F(0) by a central stalk formed by the gamma and epsilon chains, while a peripheral stalk is formed by the delta and b chains.

Its subcellular location is the cell inner membrane. In terms of biological role, f(1)F(0) ATP synthase produces ATP from ADP in the presence of a proton or sodium gradient. F-type ATPases consist of two structural domains, F(1) containing the extramembraneous catalytic core and F(0) containing the membrane proton channel, linked together by a central stalk and a peripheral stalk. During catalysis, ATP synthesis in the catalytic domain of F(1) is coupled via a rotary mechanism of the central stalk subunits to proton translocation. Component of the F(0) channel, it forms part of the peripheral stalk, linking F(1) to F(0). This chain is ATP synthase subunit b, found in Rickettsia prowazekii (strain Madrid E).